Consider the following 372-residue polypeptide: Chaperone protein DnaJ (372 aa).

A J domain is found at 5 to 70 (DYYEVLGVAK…DKRAAYDQFG (66 aa)). The CR-type zinc finger occupies 133–211 (GTETKIRIPT…CHGEGRVKKH (79 aa)). Cys-146, Cys-149, Cys-163, Cys-166, Cys-185, Cys-188, Cys-199, and Cys-202 together coordinate Zn(2+). CXXCXGXG motif repeat units lie at residues 146-153 (CGTCHGSG), 163-170 (CSACGGHG), 185-192 (CPRCGGTG), and 199-206 (CPSCHGEG).

Belongs to the DnaJ family. Homodimer. Requires Zn(2+) as cofactor.

The protein localises to the cytoplasm. In terms of biological role, participates actively in the response to hyperosmotic and heat shock by preventing the aggregation of stress-denatured proteins and by disaggregating proteins, also in an autonomous, DnaK-independent fashion. Unfolded proteins bind initially to DnaJ; upon interaction with the DnaJ-bound protein, DnaK hydrolyzes its bound ATP, resulting in the formation of a stable complex. GrpE releases ADP from DnaK; ATP binding to DnaK triggers the release of the substrate protein, thus completing the reaction cycle. Several rounds of ATP-dependent interactions between DnaJ, DnaK and GrpE are required for fully efficient folding. Also involved, together with DnaK and GrpE, in the DNA replication of plasmids through activation of initiation proteins. In Thiobacillus denitrificans (strain ATCC 25259 / T1), this protein is Chaperone protein DnaJ.